The primary structure comprises 150 residues: D-galactose-binding lectin (150 aa).

The D-galactose site is built by H16 and G19. N26 carries N-linked (GlcNAc...) asparagine glycosylation. D-galactose is bound by residues 35–37, H64, and G67; that span reads DIH. The N-linked (GlcNAc...) asparagine glycan is linked to N74. Residues 83–85, H108, and G111 contribute to the D-galactose site; that span reads DRH. N-linked (GlcNAc...) asparagine glycosylation occurs at N118. 127–129 contributes to the D-galactose binding site; that stretch reads DEH.

In terms of assembly, oligomerizes in solution. Post-translationally, the N-terminus is blocked. In terms of tissue distribution, expressed in mantle. Expressed 51 and 1.6 fold in mantle and gonads, respectively, relative to that in hemocytes. Expressed at a much lower level in other tissues tested including gill, muscle and hepatopancreas.

Hemagglutinating activity does not require Ca(2+) ions. Hemagglutinating activity is inhibited by porcine stomach mucin (PSM), bovine submaxillary mucin (BSM) and fetuin. Agglutination of V.proteolyticus bacteria is inhibited by D-galactose, but not by D-glucose. Fungal binding is inhibited by D-galactose, but not by pathogen-associated molecular patterns (PAMPs) including lipopolysaccharide (LPS), peptidoglycan and beta-glucan. D-galactose-binding lectin. Binds both alpha and beta anomer of galactose (Gal). Binds strongly to branched beta-Gal-terminated glycans and weakly to unbranched glycans with alpha-Gal on the end of chains. Has strong affinity for both Gal and GalNAc. Binds glycoproteins containing mucin-type chains. Has hemagglutinating activity towards human group A erythrocytes. Has hemagglutinating activity towards rabbit erythrocytes. Agglutinates V.proteolyticus bacteria. Binds strongly to fungi including species from genera Aspergillus, Alternaria, Fusarium and Haematonectria, and to a lesser extent to fungi from genera Trichoderma. Decreases conidia germination and hyphal growth of fungi. At high concentration, stimulates secretion of cytokines TNF-alpha and IFN-gamma from human peripheral blood cells, and at low concentration reduces hyperexpression of cytokine IL-10 in these cells, indicative of immunomodulatory capability. However, has no effect on IL-4 production. Recognizes pathogen-associated molecular patterns (PAMPs) and binds to peptidoglycan from S.aureus, but has only little binding to beta-1,3-glucan from E.gracilis and lipopolysaccharide (LPS) from E.coli. May be involved in innate immunity acting as an antibacterial or antifungal agent recognizing carbohydrate ligands on the surface of pathogens. This Mytilus trossulus (Blue mussel) protein is D-galactose-binding lectin.